Consider the following 516-residue polypeptide: GMP synthase [glutamine-hydrolyzing] (516 aa).

A Glutamine amidotransferase type-1 domain is found at 8 to 198; it reads KILILDFGSQ…VVNICGCDTL (191 aa). Cys-84 (nucleophile) is an active-site residue. Catalysis depends on residues His-172 and Glu-174. One can recognise a GMPS ATP-PPase domain in the interval 199-391; the sequence is WNIENIIEND…LGLPYNMLYR (193 aa). 226-232 contacts ATP; the sequence is SGGVDSS.

As to quaternary structure, homodimer.

It carries out the reaction XMP + L-glutamine + ATP + H2O = GMP + L-glutamate + AMP + diphosphate + 2 H(+). The protein operates within purine metabolism; GMP biosynthesis; GMP from XMP (L-Gln route): step 1/1. Catalyzes the synthesis of GMP from XMP. The protein is GMP synthase [glutamine-hydrolyzing] of Francisella tularensis subsp. holarctica (strain LVS).